The primary structure comprises 254 residues: MRILVANDDGYLAPGLAALVEACRGLGELDVVAPEQNSSGTSNALTLQRPLSVWTAANGYRYLNGTPSDCVHVALTGLLPQRPDLVVSGINNGANMGDDTLYSGTVAAAMEGYLFGIPSIAFSLSEKGWTHLDTAARVARRLIEQVIALPPVPGAWLLNVNIPDRPYEDLRGLRTTRLGRRHASEPVIRQSNPRGEPIYWIGAAGDAREAGAGTDFHAVAQGHVSVTPLQVDLTDHTCLPAWGSWLERAGEGGR.

The a divalent metal cation site is built by Asp-8, Asp-9, Ser-39, and Asn-91.

Belongs to the SurE nucleotidase family. Requires a divalent metal cation as cofactor.

Its subcellular location is the cytoplasm. It catalyses the reaction a ribonucleoside 5'-phosphate + H2O = a ribonucleoside + phosphate. Nucleotidase that shows phosphatase activity on nucleoside 5'-monophosphates. This Methylibium petroleiphilum (strain ATCC BAA-1232 / LMG 22953 / PM1) protein is 5'-nucleotidase SurE.